Here is a 1157-residue protein sequence, read N- to C-terminus: DNA-directed RNA polymerase subunit beta (1157 aa).

Belongs to the RNA polymerase beta chain family. The RNAP catalytic core consists of 2 alpha, 1 beta, 1 beta' and 1 omega subunit. When a sigma factor is associated with the core the holoenzyme is formed, which can initiate transcription.

It catalyses the reaction RNA(n) + a ribonucleoside 5'-triphosphate = RNA(n+1) + diphosphate. Functionally, DNA-dependent RNA polymerase catalyzes the transcription of DNA into RNA using the four ribonucleoside triphosphates as substrates. The chain is DNA-directed RNA polymerase subunit beta from Tropheryma whipplei (strain Twist) (Whipple's bacillus).